Here is a 202-residue protein sequence, read N- to C-terminus: MYEGPVQDLIDELGKLPGVGPKSAQRIAFHLLQVEPPEIDRLQAALQKVRDGVQFCVVCGTVSDGELCRICADPRRDRTMICVVEEPKDVQAIERTREFRGRYHVLGGALDPLSGVGPDQLRIRELLARIGNQDDGVDVAEVIIATDPNTEGEATATYLVRMLRDFPGLTVTRLASGLPMGGDLEFADELTLGRALSGRRAL.

The C4-type zinc-finger motif lies at 56–71 (CVVCGTVSDGELCRIC). One can recognise a Toprim domain in the interval 79-179 (TMICVVEEPK…TVTRLASGLP (101 aa)).

Belongs to the RecR family.

May play a role in DNA repair. It seems to be involved in an RecBC-independent recombinational process of DNA repair. It may act with RecF and RecO. The chain is Recombination protein RecR from Nocardia farcinica (strain IFM 10152).